The sequence spans 565 residues: Sulfite reductase [NADPH] hemoprotein beta-component (565 aa).

Residues cysteine 429, cysteine 435, cysteine 474, and cysteine 478 each coordinate [4Fe-4S] cluster. Cysteine 478 lines the siroheme pocket.

This sequence belongs to the nitrite and sulfite reductase 4Fe-4S domain family. As to quaternary structure, alpha(8)-beta(8). The alpha component is a flavoprotein, the beta component is a hemoprotein. It depends on siroheme as a cofactor. [4Fe-4S] cluster serves as cofactor.

The catalysed reaction is hydrogen sulfide + 3 NADP(+) + 3 H2O = sulfite + 3 NADPH + 4 H(+). It participates in sulfur metabolism; hydrogen sulfide biosynthesis; hydrogen sulfide from sulfite (NADPH route): step 1/1. Component of the sulfite reductase complex that catalyzes the 6-electron reduction of sulfite to sulfide. This is one of several activities required for the biosynthesis of L-cysteine from sulfate. This is Sulfite reductase [NADPH] hemoprotein beta-component from Shewanella baltica (strain OS185).